Here is a 325-residue protein sequence, read N- to C-terminus: Elongation factor P--(R)-beta-lysine ligase (325 aa).

76–78 (SPE) contributes to the substrate binding site. Residues 100–102 (RNE) and Asn-109 each bind ATP. Tyr-118 provides a ligand contact to substrate. ATP is bound at residue 244–245 (EL). A substrate-binding site is contributed by Glu-251. An ATP-binding site is contributed by Gly-300.

The protein belongs to the class-II aminoacyl-tRNA synthetase family. EpmA subfamily. Homodimer.

The enzyme catalyses D-beta-lysine + L-lysyl-[protein] + ATP = N(6)-((3R)-3,6-diaminohexanoyl)-L-lysyl-[protein] + AMP + diphosphate + H(+). Its function is as follows. With EpmB is involved in the beta-lysylation step of the post-translational modification of translation elongation factor P (EF-P). Catalyzes the ATP-dependent activation of (R)-beta-lysine produced by EpmB, forming a lysyl-adenylate, from which the beta-lysyl moiety is then transferred to the epsilon-amino group of a conserved specific lysine residue in EF-P. This chain is Elongation factor P--(R)-beta-lysine ligase, found in Yersinia enterocolitica serotype O:8 / biotype 1B (strain NCTC 13174 / 8081).